The following is a 521-amino-acid chain: Ribonuclease Y (521 aa).

A helical membrane pass occupies residues 10-30 (LIITAGVSIALAIVAFFLGYL). Residues 210-270 (TVSVVTLPND…IRREIAKLTL (61 aa)) form the KH domain. One can recognise an HD domain in the interval 336–430 (VLAHSIEVAN…IQAADSVSAA (95 aa)).

This sequence belongs to the RNase Y family.

Its subcellular location is the cell membrane. Functionally, endoribonuclease that initiates mRNA decay. This chain is Ribonuclease Y, found in Caldicellulosiruptor saccharolyticus (strain ATCC 43494 / DSM 8903 / Tp8T 6331).